A 196-amino-acid chain; its full sequence is ATP-dependent Clp protease proteolytic subunit (196 aa).

S96 (nucleophile) is an active-site residue. The active site involves H121.

It belongs to the peptidase S14 family. Fourteen ClpP subunits assemble into 2 heptameric rings which stack back to back to give a disk-like structure with a central cavity, resembling the structure of eukaryotic proteasomes.

The protein localises to the cytoplasm. The catalysed reaction is Hydrolysis of proteins to small peptides in the presence of ATP and magnesium. alpha-casein is the usual test substrate. In the absence of ATP, only oligopeptides shorter than five residues are hydrolyzed (such as succinyl-Leu-Tyr-|-NHMec, and Leu-Tyr-Leu-|-Tyr-Trp, in which cleavage of the -Tyr-|-Leu- and -Tyr-|-Trp bonds also occurs).. Functionally, cleaves peptides in various proteins in a process that requires ATP hydrolysis. Has a chymotrypsin-like activity. Plays a major role in the degradation of misfolded proteins. The chain is ATP-dependent Clp protease proteolytic subunit from Streptococcus thermophilus (strain CNRZ 1066).